The primary structure comprises 437 residues: Bifunctional protein GlmU (437 aa).

The tract at residues 1–223 (MHNTAVILAA…WDECRGVNSR (223 aa)) is pyrophosphorylase. UDP-N-acetyl-alpha-D-glucosamine-binding positions include 8-11 (LAAG), K22, Q70, 75-76 (GT), 96-98 (YGD), G135, E149, N164, and N221. D98 contributes to the Mg(2+) binding site. A Mg(2+)-binding site is contributed by N221. Residues 224–244 (AELAAAEAAMQSRLRAAALAA) form a linker region. Positions 245–437 (GVTMTAPETV…AELRMTKGKR (193 aa)) are N-acetyltransferase. UDP-N-acetyl-alpha-D-glucosamine is bound by residues R310 and K328. H340 functions as the Proton acceptor in the catalytic mechanism. Residues Y343 and N354 each contribute to the UDP-N-acetyl-alpha-D-glucosamine site. Acetyl-CoA is bound by residues A357, 363-364 (NY), S382, A400, and R417.

The protein in the N-terminal section; belongs to the N-acetylglucosamine-1-phosphate uridyltransferase family. It in the C-terminal section; belongs to the transferase hexapeptide repeat family. As to quaternary structure, homotrimer. Mg(2+) is required as a cofactor.

It is found in the cytoplasm. The enzyme catalyses alpha-D-glucosamine 1-phosphate + acetyl-CoA = N-acetyl-alpha-D-glucosamine 1-phosphate + CoA + H(+). It catalyses the reaction N-acetyl-alpha-D-glucosamine 1-phosphate + UTP + H(+) = UDP-N-acetyl-alpha-D-glucosamine + diphosphate. The protein operates within nucleotide-sugar biosynthesis; UDP-N-acetyl-alpha-D-glucosamine biosynthesis; N-acetyl-alpha-D-glucosamine 1-phosphate from alpha-D-glucosamine 6-phosphate (route II): step 2/2. It functions in the pathway nucleotide-sugar biosynthesis; UDP-N-acetyl-alpha-D-glucosamine biosynthesis; UDP-N-acetyl-alpha-D-glucosamine from N-acetyl-alpha-D-glucosamine 1-phosphate: step 1/1. It participates in bacterial outer membrane biogenesis; LPS lipid A biosynthesis. Its function is as follows. Catalyzes the last two sequential reactions in the de novo biosynthetic pathway for UDP-N-acetylglucosamine (UDP-GlcNAc). The C-terminal domain catalyzes the transfer of acetyl group from acetyl coenzyme A to glucosamine-1-phosphate (GlcN-1-P) to produce N-acetylglucosamine-1-phosphate (GlcNAc-1-P), which is converted into UDP-GlcNAc by the transfer of uridine 5-monophosphate (from uridine 5-triphosphate), a reaction catalyzed by the N-terminal domain. The polypeptide is Bifunctional protein GlmU (Acidiphilium cryptum (strain JF-5)).